The following is a 93-amino-acid chain: Probable chloroethene reductive dehalogenase membrane anchor protein (93 aa).

The next 3 helical transmembrane spans lie at 3 to 23 (AIYF…FTWF), 35 to 55 (WVLG…TYAS), and 64 to 84 (SAWI…LFAA).

The protein belongs to the PceB family.

It localises to the cell membrane. Functionally, may act as a membrane anchor for the chloroethene reductive dehalogenase VcrA. In Dehalococcoides mccartyi (strain VS), this protein is Probable chloroethene reductive dehalogenase membrane anchor protein.